A 475-amino-acid chain; its full sequence is tRNA modification GTPase MnmE (475 aa).

The (6S)-5-formyl-5,6,7,8-tetrahydrofolate site is built by R24, E81, and K124. The 178-residue stretch at 220–397 (GLSVVLAGQP…LRKELLRLVG (178 aa)) folds into the TrmE-type G domain. K(+) is bound at residue N230. GTP-binding positions include 230 to 235 (NVGKSS), 249 to 255 (TPIAGTT), 274 to 277 (DTAG), and 378 to 380 (SAR). Residue S234 participates in Mg(2+) binding. T249, I251, and T254 together coordinate K(+). T255 is a Mg(2+) binding site. K475 serves as a coordination point for (6S)-5-formyl-5,6,7,8-tetrahydrofolate.

It belongs to the TRAFAC class TrmE-Era-EngA-EngB-Septin-like GTPase superfamily. TrmE GTPase family. As to quaternary structure, homodimer. Heterotetramer of two MnmE and two MnmG subunits. It depends on K(+) as a cofactor.

It localises to the cytoplasm. Functionally, exhibits a very high intrinsic GTPase hydrolysis rate. Involved in the addition of a carboxymethylaminomethyl (cmnm) group at the wobble position (U34) of certain tRNAs, forming tRNA-cmnm(5)s(2)U34. The polypeptide is tRNA modification GTPase MnmE (Cupriavidus pinatubonensis (strain JMP 134 / LMG 1197) (Cupriavidus necator (strain JMP 134))).